The chain runs to 229 residues: Geodin cluster transcription factor (229 aa).

Residues 12–39 constitute a DNA-binding region (zn(2)-C6 fungal-type); the sequence is CHACAASKVRCSKEKPTCSRCSKRGTTC. Disordered stretches follow at residues 50-100 and 141-169; these read KQLN…PGTT and TANSEPLDAEGGITSSHNTSSNSPARPPT. Composition is skewed to polar residues over residues 51–71 and 153–164; these read QLNNRSTAKESSNTTRTSLAT and ITSSHNTSSNSP.

The protein resides in the nucleus. Functionally, transcription factor that regulates the expression of the gene cluster that mediates the biosynthesis of geodin, an intermediate in the biosynthesis of other natural products. This is Geodin cluster transcription factor from Aspergillus terreus (strain NIH 2624 / FGSC A1156).